Reading from the N-terminus, the 1173-residue chain is Pyruvate-flavodoxin oxidoreductase (1173 aa).

4Fe-4S ferredoxin-type domains follow at residues 681–710 (NVPV…PVLI) and 735–766 (YRLA…MQPL). 11 residues coordinate [4Fe-4S] cluster: cysteine 690, cysteine 693, cysteine 696, cysteine 700, cysteine 744, cysteine 747, cysteine 750, cysteine 754, cysteine 810, cysteine 813, and cysteine 838. Residues 922–933 (GEGTRERAEKVG) are compositionally biased toward basic and acidic residues. Residues 922-946 (GEGTRERAEKVGDTSGFANAREKSR) form a disordered region. Cysteine 1075 serves as a coordination point for [4Fe-4S] cluster.

Belongs to the pyruvate:ferredoxin/flavodoxin oxidoreductase family. [4Fe-4S] cluster serves as cofactor.

It carries out the reaction oxidized [flavodoxin] + pyruvate + CoA + 2 H(+) = reduced [flavodoxin] + acetyl-CoA + CO2. Oxidoreductase required for the transfer of electrons from pyruvate to flavodoxin, which reduces nitrogenase. The protein is Pyruvate-flavodoxin oxidoreductase (nifJ) of Enterobacter agglomerans (Erwinia herbicola).